Reading from the N-terminus, the 174-residue chain is Centrosomal protein 20 (174 aa).

The segment at 1–104 is necessary and sufficient for homooligomerization and localization to centrosomes and pericentriolar satellites; sequence MATVAELKAV…AFEESKDNTI (104 aa). Residues 49–81 enclose the LisH domain; the sequence is ENLLINELIREYLEFNKYKYTASVLIAESGQPV. The disordered stretch occupies residues 129-174; it reads GPSLQPSDPSLGRQPSRRKPMDDHLRKEEQKSTNIEDLHVSQAVNR. A Phosphoserine modification is found at S144. The segment covering 147–167 has biased composition (basic and acidic residues); that stretch reads KPMDDHLRKEEQKSTNIEDLH.

The protein belongs to the CEP43 family. In terms of assembly, homooligomer; probably required for localization to centrosomes. Forms a complex with KIAA0753/OFIP and OFD1; within this complex may stabilize the interaction between OFD1 and KIAA0753/OFIP. Interacts with PCM1; this interaction may be mediated by KIAA0753/OFIP. Interacts with PLK1 in later G1, S, G2 and M phases of the cell cycle; this interaction recruits PLK1 to centrosomes. In terms of tissue distribution, widely expressed. Detected in brain, heart, kidney, liver, lung, skeletal muscle, placenta and intestine.

The protein resides in the cytoplasm. It is found in the cytoskeleton. Its subcellular location is the microtubule organizing center. The protein localises to the centrosome. It localises to the centriole. The protein resides in the cell projection. It is found in the cilium. Its subcellular location is the cilium basal body. The protein localises to the cytoplasmic granule. It localises to the centriolar satellite. Involved in the biogenesis of cilia. Required for the recruitment of PLK1 to centrosomes and S phase progression. This is Centrosomal protein 20 from Homo sapiens (Human).